A 199-amino-acid polypeptide reads, in one-letter code: uncharacterized protein (199 aa).

The chain crosses the membrane as a helical span at residues Ile-21–Ile-38.

It localises to the membrane. This is an uncharacterized protein from Saccharomyces cerevisiae (strain ATCC 204508 / S288c) (Baker's yeast).